Consider the following 119-residue polypeptide: Membrane-anchored ubiquitin-fold protein 1 (119 aa).

The 67-residue stretch at Phe9–Cys75 folds into the Ubiquitin-like domain. Cys116 carries the cysteine methyl ester modification. Cys116 carries the S-farnesyl cysteine lipid modification. A propeptide spans Ser117–Met119 (removed in mature form).

The protein localises to the cell membrane. In terms of biological role, may serve as docking site to facilitate the association of other proteins to the plasma membrane. This Oryza sativa subsp. japonica (Rice) protein is Membrane-anchored ubiquitin-fold protein 1 (MUB1).